The chain runs to 145 residues: RNAP inhibitory protein (145 aa).

Residues 110–123 (HIKKLNLNSLAMLS) are C-terminal tail, binds in the RNAP DNA-binding channel.

It belongs to the viral ORF131/RIP family. As to quaternary structure, interacts with host RNA polymerase (RNAP) subunits Rpo1N and Rpo2.

Its subcellular location is the virion. Its function is as follows. Plays a role in the inhibition of global transcription by interacting with the RNA polymerase (RNAP) clamp, locking it in a fixed position and inhibiting the formation and/or stability of the pre-initiation complex (PIC). Also overlaps with the transcription factor B binding site; overall RIP probably interferes with DNA loading onto RNAP but does not displace DNA once it is loaded. May play a role in virus particle assembly, possibly by dissociating active RNAP from the virus genome. The sequence is that of RNAP inhibitory protein from Acidianus two-tailed virus (ATV).